Consider the following 144-residue polypeptide: Large ribosomal subunit protein uL15 (144 aa).

The tract at residues 1–57 (MLLNTLSPAAGSKHAPKRLGRGVGSGLGKTGGRGHKGQKSRSGGKVRPGFEGGQMPL) is disordered. Over residues 21-31 (RGVGSGLGKTG) the composition is skewed to gly residues. Positions 32 to 44 (GRGHKGQKSRSGG) are enriched in basic residues.

The protein belongs to the universal ribosomal protein uL15 family. Part of the 50S ribosomal subunit.

Its function is as follows. Binds to the 23S rRNA. In Vibrio cholerae serotype O1 (strain ATCC 39541 / Classical Ogawa 395 / O395), this protein is Large ribosomal subunit protein uL15.